The following is a 367-amino-acid chain: Alginate lyase (367 aa).

Residues 1 to 27 (MKTSHLIRIALPGALAAALLASQVSQA) form the signal peptide. Substrate-binding positions include 65–66 (SK), 138–139 (HT), and tyrosine 256.

Belongs to the polysaccharide lyase 5 family.

It is found in the periplasm. It catalyses the reaction Eliminative cleavage of alginate to give oligosaccharides with 4-deoxy-alpha-L-erythro-hex-4-enuronosyl groups at their non-reducing ends and beta-D-mannuronate at their reducing end.. Catalyzes the depolymerization of alginate by cleaving the beta-1,4 glycosidic bond between two adjacent sugar residues via a beta-elimination mechanism. May serve to degrade mislocalized alginate that is trapped in the periplasmic space. Acts preferentially on non-acetylated alginate or its precursor mannuronan. Is able to catalyze cleavage adjacent to either mannuronate or guluronate residues in alginate. Exhaustive digestion of alginate by AlgL generates dimeric and trimeric products. In addition to its enzymatic function, AlgL appears to be required for alginate export, maybe as part of a multi-protein alginate-secretion complex. The chain is Alginate lyase from Pseudomonas aeruginosa (strain ATCC 15692 / DSM 22644 / CIP 104116 / JCM 14847 / LMG 12228 / 1C / PRS 101 / PAO1).